We begin with the raw amino-acid sequence, 575 residues long: Alpha-(1,6)-fucosyltransferase (575 aa).

The Cytoplasmic portion of the chain corresponds to 1–9 (MRPWTGSWR). The helical; Signal-anchor for type II membrane protein transmembrane segment at 10–30 (WIMLILFAWGTLLFYIGGHLV) threads the bilayer. At 31 to 575 (RDNDHSDHSS…KYPTYPEADK (545 aa)) the chain is on the lumenal side. 3 cysteine pairs are disulfide-bonded: Cys-204–Cys-266, Cys-212–Cys-230, and Cys-218–Cys-222. A GT23 domain is found at 206–493 (KAKKLVCNIN…PDASANFRSL (288 aa)). A Phosphoserine modification is found at Ser-278. Residues 299 to 305 (PRPPYLP) carry the SH3-binding motif. The segment at 365 to 366 (RR) is important for donor substrate binding. The cysteines at positions 465 and 472 are disulfide-linked. An SH3 domain is found at 502–563 (PNAHNQIAIY…PSYKVREKIE (62 aa)).

It belongs to the glycosyltransferase 23 family. Post-translationally, tyrosine phosphorylated by PKDCC/VLK. Highest expression in brain.

It is found in the golgi apparatus. The protein localises to the golgi stack membrane. The catalysed reaction is N(4)-{beta-D-GlcNAc-(1-&gt;2)-alpha-D-Man-(1-&gt;3)-[beta-D-GlcNAc-(1-&gt;2)-alpha-D-Man-(1-&gt;6)]-beta-D-Man-(1-&gt;4)-beta-D-GlcNAc-(1-&gt;4)-beta-D-GlcNAc}-L-asparaginyl-[protein] + GDP-beta-L-fucose = an N(4)-{beta-D-GlcNAc-(1-&gt;2)-alpha-D-Man-(1-&gt;3)-[beta-D-GlcNAc-(1-&gt;2)-alpha-D-Man-(1-&gt;6)]-beta-D-Man-(1-&gt;4)-beta-D-GlcNAc-(1-&gt;4)-[alpha-L-Fuc-(1-&gt;6)]-beta-D-GlcNAc}-L-asparaginyl-[protein] + GDP + H(+). It functions in the pathway protein modification; protein glycosylation. In terms of biological role, catalyzes the addition of fucose in alpha 1-6 linkage to the first GlcNAc residue, next to the peptide chains in N-glycans. This is Alpha-(1,6)-fucosyltransferase (FUT8) from Sus scrofa (Pig).